The primary structure comprises 508 residues: Photosystem II CP47 reaction center protein (508 aa).

6 consecutive transmembrane segments (helical) span residues 21 to 36 (AVHI…WAGS), 101 to 115 (IVFS…IWHW), 140 to 156 (GIHL…FGAF), 203 to 218 (IAAG…FHLS), 237 to 252 (VLSS…AFVV), and 457 to 472 (SFAL…HGAR).

This sequence belongs to the PsbB/PsbC family. PsbB subfamily. In terms of assembly, PSII is composed of 1 copy each of membrane proteins PsbA, PsbB, PsbC, PsbD, PsbE, PsbF, PsbH, PsbI, PsbJ, PsbK, PsbL, PsbM, PsbT, PsbX, PsbY, PsbZ, Psb30/Ycf12, at least 3 peripheral proteins of the oxygen-evolving complex and a large number of cofactors. It forms dimeric complexes. Binds multiple chlorophylls. PSII binds additional chlorophylls, carotenoids and specific lipids. serves as cofactor.

The protein localises to the plastid. The protein resides in the chloroplast thylakoid membrane. Its function is as follows. One of the components of the core complex of photosystem II (PSII). It binds chlorophyll and helps catalyze the primary light-induced photochemical processes of PSII. PSII is a light-driven water:plastoquinone oxidoreductase, using light energy to abstract electrons from H(2)O, generating O(2) and a proton gradient subsequently used for ATP formation. The chain is Photosystem II CP47 reaction center protein from Nandina domestica (Heavenly bamboo).